Consider the following 473-residue polypeptide: Cysteine protease ATG4A (473 aa).

The segment at 1–33 (MTSLPGRGVSPSSSDPLCEGNAAPSSSSSGQDL) is disordered. Catalysis depends on C160, which acts as the Nucleophile. Residues D357 and H359 contribute to the active site.

The protein belongs to the peptidase C54 family. Interacts with ATG8.

Its subcellular location is the cytoplasm. The catalysed reaction is [protein]-C-terminal L-amino acid-glycyl-phosphatidylethanolamide + H2O = [protein]-C-terminal L-amino acid-glycine + a 1,2-diacyl-sn-glycero-3-phosphoethanolamine. In terms of biological role, cysteine protease that plays a key role in autophagy by mediating both proteolytic activation and delipidation of ATG8 family proteins. The protease activity is required for proteolytic activation of ATG8 family proteins: cleaves the C-terminal amino acid of ATG8 proteins to reveal a C-terminal glycine. Exposure of the glycine at the C-terminus is essential for ATG8 proteins conjugation to phosphatidylethanolamine (PE) and insertion to membranes, which is necessary for autophagy. In addition to the protease activity, also mediates delipidation of PE-conjugated ATG8 proteins. The chain is Cysteine protease ATG4A (ATG4A) from Oryza sativa subsp. indica (Rice).